Reading from the N-terminus, the 1392-residue chain is DNA-directed RNA polymerase subunit beta'' (1392 aa).

4 residues coordinate Zn(2+): Cys-224, Cys-295, Cys-302, and Cys-305.

It belongs to the RNA polymerase beta' chain family. RpoC2 subfamily. As to quaternary structure, in plastids the minimal PEP RNA polymerase catalytic core is composed of four subunits: alpha, beta, beta', and beta''. When a (nuclear-encoded) sigma factor is associated with the core the holoenzyme is formed, which can initiate transcription. Requires Zn(2+) as cofactor.

The protein resides in the plastid. The protein localises to the chloroplast. It carries out the reaction RNA(n) + a ribonucleoside 5'-triphosphate = RNA(n+1) + diphosphate. Its function is as follows. DNA-dependent RNA polymerase catalyzes the transcription of DNA into RNA using the four ribonucleoside triphosphates as substrates. This chain is DNA-directed RNA polymerase subunit beta'', found in Solanum bulbocastanum (Wild potato).